Here is a 369-residue protein sequence, read N- to C-terminus: Glutamate 5-kinase (369 aa).

K9 contacts ATP. Substrate is bound by residues S49, D136, and N148. Residues 168-169 (TD) and 210-216 (TGGMLTK) contribute to the ATP site. A PUA domain is found at 275-355 (RGSVYVDEGA…KGVFIHRDDW (81 aa)).

It belongs to the glutamate 5-kinase family.

Its subcellular location is the cytoplasm. The enzyme catalyses L-glutamate + ATP = L-glutamyl 5-phosphate + ADP. Its pathway is amino-acid biosynthesis; L-proline biosynthesis; L-glutamate 5-semialdehyde from L-glutamate: step 1/2. Catalyzes the transfer of a phosphate group to glutamate to form L-glutamate 5-phosphate. This is Glutamate 5-kinase from Neisseria meningitidis serogroup B (strain ATCC BAA-335 / MC58).